The sequence spans 319 residues: Geranylgeranyl pyrophosphate synthase (319 aa).

Lysine 42, arginine 45, and histidine 74 together coordinate isopentenyl diphosphate. Positions 81 and 85 each coordinate Mg(2+). Dimethylallyl diphosphate is bound at residue arginine 90. Arginine 91 provides a ligand contact to isopentenyl diphosphate. Lysine 172, threonine 173, glutamine 210, lysine 226, and lysine 236 together coordinate dimethylallyl diphosphate.

The protein belongs to the FPP/GGPP synthase family. As to quaternary structure, homodimer. Mg(2+) is required as a cofactor.

The enzyme catalyses isopentenyl diphosphate + dimethylallyl diphosphate = (2E)-geranyl diphosphate + diphosphate. It catalyses the reaction isopentenyl diphosphate + (2E)-geranyl diphosphate = (2E,6E)-farnesyl diphosphate + diphosphate. It carries out the reaction isopentenyl diphosphate + (2E,6E)-farnesyl diphosphate = (2E,6E,10E)-geranylgeranyl diphosphate + diphosphate. The protein operates within isoprenoid biosynthesis; geranyl diphosphate biosynthesis; geranyl diphosphate from dimethylallyl diphosphate and isopentenyl diphosphate: step 1/1. It functions in the pathway isoprenoid biosynthesis; farnesyl diphosphate biosynthesis; farnesyl diphosphate from geranyl diphosphate and isopentenyl diphosphate: step 1/1. Its pathway is isoprenoid biosynthesis; geranylgeranyl diphosphate biosynthesis; geranylgeranyl diphosphate from farnesyl diphosphate and isopentenyl diphosphate: step 1/1. In terms of biological role, catalyzes the addition of 3 molecules of isopentenyl diphosphate (IPP) onto dimethylallyl diphosphate (DMAPP) to form geranylgeranyl pyrophosphate (GGPP). Catalyzes the synthesis of geranylgeranyl pyrophosphate as a major product and of farnesyl pyrophosphate in smaller amounts. The protein is Geranylgeranyl pyrophosphate synthase of Geoglobus acetivorans.